A 377-amino-acid polypeptide reads, in one-letter code: Modification methylase CviBIII (377 aa).

It belongs to the N(4)/N(6)-methyltransferase family.

The catalysed reaction is a 2'-deoxyadenosine in DNA + S-adenosyl-L-methionine = an N(6)-methyl-2'-deoxyadenosine in DNA + S-adenosyl-L-homocysteine + H(+). In terms of biological role, a gamma subtype methylase that recognizes the double-stranded sequence 5'-TCGA-3' and methylates A-4 on both strands. The polypeptide is Modification methylase CviBIII (CVIBIIIM) (Paramecium bursaria Chlorella virus NC1A (PBCV-NC1A)).